We begin with the raw amino-acid sequence, 239 residues long: tRNA1(Val) (adenine(37)-N6)-methyltransferase (239 aa).

Belongs to the methyltransferase superfamily. tRNA (adenine-N(6)-)-methyltransferase family.

Its subcellular location is the cytoplasm. The catalysed reaction is adenosine(37) in tRNA1(Val) + S-adenosyl-L-methionine = N(6)-methyladenosine(37) in tRNA1(Val) + S-adenosyl-L-homocysteine + H(+). Functionally, specifically methylates the adenine in position 37 of tRNA(1)(Val) (anticodon cmo5UAC). This chain is tRNA1(Val) (adenine(37)-N6)-methyltransferase, found in Trichodesmium erythraeum (strain IMS101).